A 290-amino-acid chain; its full sequence is Inactive tau-tubulin kinase ttbk-6 (290 aa).

In terms of domain architecture, Protein kinase spans Met1–Ile240. Disordered regions lie at residues Ser244–Glu263 and Arg268–Leu290.

It belongs to the protein kinase superfamily. CK1 Ser/Thr protein kinase family.

This Caenorhabditis elegans protein is Inactive tau-tubulin kinase ttbk-6.